We begin with the raw amino-acid sequence, 160 residues long: Eosinophil cationic protein (160 aa).

The first 27 residues, 1–27, serve as a signal peptide directing secretion; sequence MVPKLFTPQICLLLLLGLMGVEGSLHA. Residues 28–72 form a required for nearly all of the bactericidal activities; partially involved in LPS-binding region; the sequence is RPPQFTKAQWFAIQHINVNPPRCTIAMRVINNYQRRCKNQNTFLR. H42 serves as the catalytic Proton acceptor. Disulfide bonds link C50–C110, C64–C123, C82–C138, and C89–C98. Y60 is modified (3'-nitrotyrosine). 65–69 provides a ligand contact to substrate; the sequence is KNQNT. N-linked (GlcNAc...) asparagine glycans are attached at residues N84, N92, and N119. H155 (proton donor) is an active-site residue.

Belongs to the pancreatic ribonuclease family. In terms of assembly, interacts with bacterial lipopolysaccharide (LPS) and lipoteichoic acid (LTA). In vitro interacts with phospholipid bilayers.

The protein resides in the secreted. Cytotoxin and helminthotoxin with low-efficiency ribonuclease activity. Possesses a wide variety of biological activities. Exhibits antibacterial activity. The protein is Eosinophil cationic protein (RNASE3) of Macaca nemestrina (Pig-tailed macaque).